A 642-amino-acid polypeptide reads, in one-letter code: 2-oxoacid:ferredoxin oxidoreductase 2, subunit alpha (642 aa).

A YPITP motif motif is present at residues 263 to 267; sequence YPITP. The substrate site is built by Thr-266 and Arg-356.

As to quaternary structure, heterodimer composed of an alpha and a beta subunit.

It carries out the reaction a 2-oxocarboxylate + 2 oxidized [2Fe-2S]-[ferredoxin] + CoA = an acyl-CoA + 2 reduced [2Fe-2S]-[ferredoxin] + CO2 + H(+). Catalyzes the coenzyme A-dependent oxidative decarboxylation of different 2-oxoacids such as pyruvate, 2-oxobutyrate, glyoxylate and 2-oxoglutarate to form their CoA derivatives. In Aeropyrum pernix (strain ATCC 700893 / DSM 11879 / JCM 9820 / NBRC 100138 / K1), this protein is 2-oxoacid:ferredoxin oxidoreductase 2, subunit alpha.